Reading from the N-terminus, the 240-residue chain is MNVYDLAVISHIENITDIEFEYILSSQDDKYLYVDNNILKLHYKDKELFIDFNSSEILNRINPSTKKCSVVQAVEGRSKDKLNILDTTAGLGRDTFTLAARGHRLVSLEKDCYIFVLLADTLNRARQIPNLKDIANQIELINIDANEYINTASISFDCIYIDPMFPQRNKSAKVKQGMQVLHDIAFNDDESNSNLLKNIIISKKTKKAVVKRPINADFLYGKKPTSQLKGKTNRFDVYSL.

Residues 93–94 (RD) and D162 contribute to the S-adenosyl-L-methionine site.

It belongs to the methyltransferase superfamily. RsmJ family.

It is found in the cytoplasm. It carries out the reaction guanosine(1516) in 16S rRNA + S-adenosyl-L-methionine = N(2)-methylguanosine(1516) in 16S rRNA + S-adenosyl-L-homocysteine + H(+). Its function is as follows. Specifically methylates the guanosine in position 1516 of 16S rRNA. In Francisella philomiragia subsp. philomiragia (strain ATCC 25017 / CCUG 19701 / FSC 153 / O#319-036), this protein is Ribosomal RNA small subunit methyltransferase J.